Here is a 312-residue protein sequence, read N- to C-terminus: Malate dehydrogenase (312 aa).

Residues 7–13 (GAAGGIG) and aspartate 34 each bind NAD(+). Substrate is bound by residues arginine 81 and arginine 87. NAD(+) contacts are provided by residues asparagine 94 and 117–119 (ITN). Positions 119 and 153 each coordinate substrate. Histidine 177 functions as the Proton acceptor in the catalytic mechanism. NAD(+) is bound at residue methionine 227.

Belongs to the LDH/MDH superfamily. MDH type 1 family. In terms of assembly, homodimer.

The catalysed reaction is (S)-malate + NAD(+) = oxaloacetate + NADH + H(+). In terms of biological role, catalyzes the reversible oxidation of malate to oxaloacetate. The protein is Malate dehydrogenase of Serratia proteamaculans (strain 568).